A 336-amino-acid polypeptide reads, in one-letter code: Protein RecA (336 aa).

Residue glycine 66–threonine 73 participates in ATP binding.

Belongs to the RecA family.

The protein resides in the cytoplasm. Functionally, can catalyze the hydrolysis of ATP in the presence of single-stranded DNA, the ATP-dependent uptake of single-stranded DNA by duplex DNA, and the ATP-dependent hybridization of homologous single-stranded DNAs. It interacts with LexA causing its activation and leading to its autocatalytic cleavage. This chain is Protein RecA, found in Mycoplasma pneumoniae (strain ATCC 29342 / M129 / Subtype 1) (Mycoplasmoides pneumoniae).